Reading from the N-terminus, the 210-residue chain is Ribosomal RNA large subunit methyltransferase E (210 aa).

Residues G67, W69, D87, D103, and D128 each coordinate S-adenosyl-L-methionine. K168 functions as the Proton acceptor in the catalytic mechanism.

Belongs to the class I-like SAM-binding methyltransferase superfamily. RNA methyltransferase RlmE family.

It is found in the cytoplasm. The enzyme catalyses uridine(2552) in 23S rRNA + S-adenosyl-L-methionine = 2'-O-methyluridine(2552) in 23S rRNA + S-adenosyl-L-homocysteine + H(+). Specifically methylates the uridine in position 2552 of 23S rRNA at the 2'-O position of the ribose in the fully assembled 50S ribosomal subunit. This Psychrobacter arcticus (strain DSM 17307 / VKM B-2377 / 273-4) protein is Ribosomal RNA large subunit methyltransferase E.